The following is a 760-amino-acid chain: 5-methyltetrahydropteroyltriglutamate--homocysteine methyltransferase (760 aa).

5-methyltetrahydropteroyltri-L-glutamate is bound by residues 17 to 20 and Lys-113; that span reads RELK. L-homocysteine is bound by residues 433 to 435 and Glu-486; that span reads IGS. L-methionine-binding positions include 433–435 and Glu-486; that span reads IGS. 5-methyltetrahydropteroyltri-L-glutamate contacts are provided by residues 517 to 518 and Trp-563; that span reads RC. Asp-601 provides a ligand contact to L-homocysteine. An L-methionine-binding site is contributed by Asp-601. Position 607 (Glu-607) interacts with 5-methyltetrahydropteroyltri-L-glutamate. Zn(2+) is bound by residues His-643, Cys-645, and Glu-667. His-696 acts as the Proton donor in catalysis. Position 728 (Cys-728) interacts with Zn(2+).

It belongs to the vitamin-B12 independent methionine synthase family. Requires Zn(2+) as cofactor.

The catalysed reaction is 5-methyltetrahydropteroyltri-L-glutamate + L-homocysteine = tetrahydropteroyltri-L-glutamate + L-methionine. Its pathway is amino-acid biosynthesis; L-methionine biosynthesis via de novo pathway; L-methionine from L-homocysteine (MetE route): step 1/1. Functionally, catalyzes the transfer of a methyl group from 5-methyltetrahydrofolate to homocysteine resulting in methionine formation. This Chromobacterium violaceum (strain ATCC 12472 / DSM 30191 / JCM 1249 / CCUG 213 / NBRC 12614 / NCIMB 9131 / NCTC 9757 / MK) protein is 5-methyltetrahydropteroyltriglutamate--homocysteine methyltransferase.